A 379-amino-acid polypeptide reads, in one-letter code: Queuine tRNA-ribosyltransferase (379 aa).

Asp94 acts as the Proton acceptor in catalysis. Residues 94–98 (DSGGF), Asp148, Gln191, and Gly218 each bind substrate. The interval 249–255 (GVGSPDS) is RNA binding. Asp268 (nucleophile) is an active-site residue. Residues 273–277 (TRIGR) are RNA binding; important for wobble base 34 recognition. 4 residues coordinate Zn(2+): Cys306, Cys308, Cys311, and His337.

The protein belongs to the queuine tRNA-ribosyltransferase family. As to quaternary structure, homodimer. Within each dimer, one monomer is responsible for RNA recognition and catalysis, while the other monomer binds to the replacement base PreQ1. Zn(2+) is required as a cofactor.

The enzyme catalyses 7-aminomethyl-7-carbaguanine + guanosine(34) in tRNA = 7-aminomethyl-7-carbaguanosine(34) in tRNA + guanine. It functions in the pathway tRNA modification; tRNA-queuosine biosynthesis. In terms of biological role, catalyzes the base-exchange of a guanine (G) residue with the queuine precursor 7-aminomethyl-7-deazaguanine (PreQ1) at position 34 (anticodon wobble position) in tRNAs with GU(N) anticodons (tRNA-Asp, -Asn, -His and -Tyr). Catalysis occurs through a double-displacement mechanism. The nucleophile active site attacks the C1' of nucleotide 34 to detach the guanine base from the RNA, forming a covalent enzyme-RNA intermediate. The proton acceptor active site deprotonates the incoming PreQ1, allowing a nucleophilic attack on the C1' of the ribose to form the product. After dissociation, two additional enzymatic reactions on the tRNA convert PreQ1 to queuine (Q), resulting in the hypermodified nucleoside queuosine (7-(((4,5-cis-dihydroxy-2-cyclopenten-1-yl)amino)methyl)-7-deazaguanosine). The chain is Queuine tRNA-ribosyltransferase from Anoxybacillus flavithermus (strain DSM 21510 / WK1).